A 906-amino-acid polypeptide reads, in one-letter code: Inter-alpha-trypsin inhibitor heavy chain H1 (906 aa).

The signal sequence occupies residues methionine 1–alanine 22. The propeptide occupies glutamine 23–asparagine 29. The 130-residue stretch at glycine 32–glutamate 161 folds into the VIT domain. Cysteine 55 carries an S-linked (Hex...) cysteine glycan. At serine 124 the chain carries Phosphoserine. Residues asparagine 287 to valine 470 enclose the VWFA domain. Residues threonine 397 and threonine 402 each carry the phosphothreonine modification. Asparagine 583 is a glycosylation site (N-linked (GlcNAc...) asparagine). O-linked (GalNAc...) serine glycosylation occurs at serine 643. Residue threonine 648 is glycosylated (O-linked (GalNAc...) threonine). An Aspartate 1-(chondroitin 4-sulfate)-ester modification is found at aspartate 667. A propeptide spanning residues proline 668 to phenylalanine 906 is cleaved from the precursor. N-linked (GlcNAc...) asparagine glycosylation is present at asparagine 745.

This sequence belongs to the ITIH family. I-alpha-I plasma protease inhibitors are assembled from one or two heavy chains (HC) and one light chain, bikunin. Inter-alpha-inhibitor (I-alpha-I) is composed of ITIH1/HC1, ITIH2/HC2 and bikunin. Interacts with TNFAIP6 (via Link and CUB domains). In terms of processing, heavy chains are linked to bikunin via chondroitin 4-sulfate esterified to the alpha-carboxyl of the C-terminal aspartate after propeptide cleavage. Post-translationally, the S-linked glycan is composed of two 6-carbon sugars, possibly Glc or Gal.

Its subcellular location is the secreted. In terms of biological role, may act as a carrier of hyaluronan in serum or as a binding protein between hyaluronan and other matrix protein, including those on cell surfaces in tissues to regulate the localization, synthesis and degradation of hyaluronan which are essential to cells undergoing biological processes. This chain is Inter-alpha-trypsin inhibitor heavy chain H1 (ITIH1), found in Bos taurus (Bovine).